The primary structure comprises 1026 residues: Multidrug resistance protein MdtC (1026 aa).

Helical transmembrane passes span 15 to 35, 333 to 353, 360 to 380, 387 to 407, 431 to 451, 463 to 483, 528 to 548, 853 to 873, 897 to 917, 953 to 973, and 984 to 1004; these read ILIAAAITLCGILGFRLLPVA, EVEETLAISVALVILVVFLFL, LIPAVAVPVSLIGTFAAMYLC, LSLMALTIATGFVVDDAIVVL, VGFTVISMSLSLVAVFLPLLL, FAVTLSVAIGISLVVSLTLTP, LVGVVFLGTVALNIWLYIAIP, LILIVAAIATVYIVLEILYES, LFNAPFSLIALIGIMLLIGIV, PIMMTTLAALFGALPLVLSGG, and ITIVGGLVMSQLLTLYTTPVV.

The protein belongs to the resistance-nodulation-cell division (RND) (TC 2.A.6) family. MdtC subfamily. In terms of assembly, part of a tripartite efflux system composed of MdtA, MdtB and MdtC. MdtC forms a heteromultimer with MdtB.

The protein resides in the cell inner membrane. The sequence is that of Multidrug resistance protein MdtC from Salmonella paratyphi A (strain ATCC 9150 / SARB42).